A 604-amino-acid chain; its full sequence is Prostaglandin G/H synthase 2 (604 aa).

An N-terminal signal peptide occupies residues methionine 1–alanine 17. One can recognise an EGF-like domain in the interval alanine 18 to threonine 55. 4 cysteine pairs are disulfide-bonded: cysteine 21/cysteine 32, cysteine 22/cysteine 145, cysteine 26/cysteine 42, and cysteine 44/cysteine 54. N-linked (GlcNAc...) asparagine glycosylation is present at asparagine 53. Arginine 106 serves as a coordination point for substrate. Asparagine 130 carries N-linked (GlcNAc...) asparagine glycosylation. Residue histidine 193 is the Proton acceptor of the active site. Position 341 (tyrosine 341) interacts with substrate. Tyrosine 371 serves as the catalytic For cyclooxygenase activity. Histidine 374 lines the heme b pocket. Asparagine 396 carries N-linked (GlcNAc...) asparagine glycosylation. Cysteine 526 is modified (S-nitrosocysteine). Cysteine 555 and cysteine 561 are disulfide-bonded. An O-acetylserine; by SPHK1 modification is found at serine 565. Asparagine 580 carries N-linked (GlcNAc...) asparagine glycosylation.

The protein belongs to the prostaglandin G/H synthase family. As to quaternary structure, homodimer. Heme b serves as cofactor. Post-translationally, S-nitrosylation by NOS2 (iNOS) activates enzyme activity. S-nitrosylation may take place on different Cys residues in addition to Cys-526. Acetylated at Ser-565 by SPHK1. During neuroinflammation, acetylation by SPHK1 promotes neuronal secretion of specialized preresolving mediators (SPMs), especially 15-R-lipoxin A4, which results in an increase of phagocytic microglia. In terms of tissue distribution, following colon injury, expressed in the wound bed mesenchyme during the first phase of repair, probably by colonic mesenchymal stem cells (at protein level).

The protein localises to the microsome membrane. The protein resides in the endoplasmic reticulum membrane. It localises to the nucleus inner membrane. It is found in the nucleus outer membrane. The catalysed reaction is (5Z,8Z,11Z,14Z)-eicosatetraenoate + AH2 + 2 O2 = prostaglandin H2 + A + H2O. It carries out the reaction (5Z,8Z,11Z,14Z)-eicosatetraenoate + 2 O2 = prostaglandin G2. The enzyme catalyses prostaglandin G2 + AH2 = prostaglandin H2 + A + H2O. It catalyses the reaction (5Z,8Z,11Z,14Z,17Z)-eicosapentaenoate + 2 O2 = prostaglandin G3. The catalysed reaction is prostaglandin G3 + AH2 = prostaglandin H3 + A + H2O. It carries out the reaction (8Z,11Z,14Z)-eicosatrienoate + 2 O2 = prostaglandin G1. The enzyme catalyses prostaglandin G1 + AH2 = prostaglandin H1 + A + H2O. It catalyses the reaction 2-(5Z,8Z,11Z,14Z)-eicosatetraenoyl-sn-glycero-3-phosphoethanolamine + 2 O2 = 2-(prostaglandin G2)-sn-glycero-3-phosphoethanolamine. The catalysed reaction is 2-(prostaglandin G2)-sn-glycero-3-phosphoethanolamine + AH2 = 2-(prostaglandin H2)-sn-glycero-3-phosphoethanolamine + A + H2O. It carries out the reaction 2-(5Z,8Z,11Z,14Z)-eicosatetraenoyl-sn-glycero-3-phosphocholine + 2 O2 = 2-(prostaglandin G2)-sn-glycero-3-phosphocholine. The enzyme catalyses 2-(prostaglandin G2)-sn-glycero-3-phosphocholine + AH2 = 2-(prostaglandin H2)-sn-glycero-3-phosphocholine + A + H2O. It catalyses the reaction (15S)-hydroperoxy-(5Z,8Z,11Z,13E)-eicosatetraenoate + AH2 = (15S)-hydroxy-(5Z,8Z,11Z,13E)-eicosatetraenoate + A + H2O. The catalysed reaction is 2-(5Z,8Z,11Z,14Z)-eicosatetraenoyl-sn-glycero-3-phosphocholine + AH2 + O2 = 2-[(15S)-hydroxy-(5Z,8Z,11Z,13E)-eicosatetraenoyl]-sn-glycero-3-phosphocholine + A + H2O. It carries out the reaction 2-(5Z,8Z,11Z,14Z)-eicosatetraenoyl-sn-glycero-3-phosphocholine + AH2 + O2 = 2-[(15R)-hydroxy-(5Z,8Z,11Z,13E)-eicosatetraenoyl]-sn-glycero-3-phosphocholine + A + H2O. The enzyme catalyses 2-(5Z,8Z,11Z,14Z)-eicosatetraenoyl-sn-glycero-3-phosphocholine + AH2 + O2 = 2-[(11R)-hydroxy-(5Z,8Z,12E,14Z)-eicosatetraenoyl]-sn-glycero-3-phosphocholine + A + H2O. It catalyses the reaction (9Z,12Z)-octadecadienoate + AH2 + O2 = 9-hydroxy-(10E,12Z)-octadecadienoate + A + H2O. The catalysed reaction is (9Z,12Z)-octadecadienoate + AH2 + O2 = 13-hydroxy-(9Z,11E)-octadecadienoate + A + H2O. It carries out the reaction (5Z,8Z,11Z,14Z)-eicosatetraenoate + AH2 + O2 = (15R)-hydroxy-(5Z,8Z,11Z,13E)-eicosatetraenoate + A + H2O. The enzyme catalyses (5Z,8Z,11Z,14Z)-eicosatetraenoate + AH2 + O2 = (11R)-hydroxy-(5Z,8Z,12E,14Z)-eicosatetraenoate + A + H2O. It catalyses the reaction (5Z,8Z,11Z,14Z,17Z)-eicosapentaenoate + AH2 + O2 = (11R)-hydroxy-(5Z,8Z,12E,14Z,17Z)-eicosapentaenoate + A + H2O. The catalysed reaction is (5Z,8Z,11Z,14Z,17Z)-eicosapentaenoate + AH2 + O2 = (18S)-hydroxy-(5Z,8Z,11Z,14Z,16E)-eicosapentaenoate + A + H2O. It carries out the reaction (5Z,8Z,11Z,14Z,17Z)-eicosapentaenoate + AH2 + O2 = (18R)-hydroxy-(5Z,8Z,11Z,14Z,16E)-eicosapentaenoate + A + H2O. The enzyme catalyses (5Z,8Z,11Z,14Z,17Z)-eicosapentaenoate + AH2 + O2 = (15R)-hydroxy-(5Z,8Z,11Z,13E,17Z)-eicosapentaenoate + A + H2O. It catalyses the reaction (5Z,8Z,11Z,14Z,17Z)-eicosapentaenoate + AH2 + O2 = (15S)-hydroxy-(5Z,8Z,11Z,13E,17Z)-eicosapentaenoate + A + H2O. The catalysed reaction is (7Z,10Z,13Z,16Z,19Z)-docosapentaenoate + AH2 + O2 = 13R-hydroxy-(7Z,10Z,14E,16Z,19Z)-docosapentaenoate + A + H2O. It carries out the reaction (4Z,7Z,10Z,13Z,16Z,19Z)-docosahexaenoate + AH2 + O2 = 13-hydroxy-(4Z,7Z,10Z,14E,16Z,19Z)-docosahexaenoate + A + H2O. The enzyme catalyses (5S)-hydroxy-(6E,8Z,11Z,14Z)-eicosatetraenoate + AH2 + O2 = (5S,15R)-dihydroxy-(6E,8Z,11Z,13E)-eicosatetraenoate + A + H2O. It catalyses the reaction (4Z,7Z,10Z,13Z,16Z,19Z)-docosahexaenoate + AH2 + O2 = 17R-hydroxy-(4Z,7Z,10Z,13Z,15E,19Z)-docosahexaenoate + A + H2O. The catalysed reaction is (5S)-hydroxy-(6E,8Z,11Z,14Z)-eicosatetraenoate + AH2 + O2 = (5S,15S)-dihydroxy-(6E,8Z,11Z,13E)-eicosatetraenoate + A + H2O. It carries out the reaction (5S)-hydroxy-(6E,8Z,11Z,14Z)-eicosatetraenoate + AH2 + O2 = (5S,11R)-dihydroxy-(6E,8Z,12E,14Z)-eicosatetraenoate + A + H2O. The enzyme catalyses 2-(5Z,8Z,11Z,14Z-eicosatetraenoyl)-glycerol + 2 O2 = 2-glyceryl-prostaglandin G2. It catalyses the reaction 2-glyceryl-prostaglandin G2 + AH2 = 2-glyceryl-prostaglandin H2 + A + H2O. The catalysed reaction is (5Z,8Z,11Z,14Z)-eicosatetraenoate + O2 = (15R)-hydroperoxy-(5Z,8Z,11Z,13E)-eicosatetraenoate. It carries out the reaction (5Z,8Z,11Z,14Z)-eicosatetraenoate + O2 = 11R-hydroperoxy-(5Z,8Z,12E,14Z)-eicosatetraenoate. The enzyme catalyses (9Z,12Z)-octadecadienoate + AH2 + O2 = (9R)-hydroxy-(10E,12Z)-octadecadienoate + A + H2O. It catalyses the reaction (9Z,12Z)-octadecadienoate + AH2 + O2 = (9S)-hydroxy-(10E,12Z)-octadecadienoate + A + H2O. The catalysed reaction is (9Z,12Z)-octadecadienoate + AH2 + O2 = (13S)-hydroxy-(9Z,11E)-octadecadienoate + A + H2O. It carries out the reaction (9Z,12Z)-octadecadienoate + AH2 + O2 = (13R)-hydroxy-(9Z,11E)-octadecadienoate + A + H2O. It functions in the pathway lipid metabolism; prostaglandin biosynthesis. Its activity is regulated as follows. Inhibited by the nonsteroidal anti-inflammatory drugs aspirin, naproxen, diclofenac, meclofenamic acid, indomethacin and their analogs. In terms of biological role, dual cyclooxygenase and peroxidase in the biosynthesis pathway of prostanoids, a class of C20 oxylipins mainly derived from arachidonate, with a particular role in the inflammatory response. The cyclooxygenase activity oxygenates arachidonate (AA, C20:4(n-6)) to the hydroperoxy endoperoxide prostaglandin G2 (PGG2), and the peroxidase activity reduces PGG2 to the hydroxy endoperoxide PGH2, the precursor of all 2-series prostaglandins and thromboxanes. This complex transformation is initiated by abstraction of hydrogen at carbon 13 (with S-stereochemistry), followed by insertion of molecular O2 to form the endoperoxide bridge between carbon 9 and 11 that defines prostaglandins. The insertion of a second molecule of O2 (bis-oxygenase activity) yields a hydroperoxy group in PGG2 that is then reduced to PGH2 by two electrons. Similarly catalyzes successive cyclooxygenation and peroxidation of dihomo-gamma-linoleate (DGLA, C20:3(n-6)) and eicosapentaenoate (EPA, C20:5(n-3)) to corresponding PGH1 and PGH3, the precursors of 1- and 3-series prostaglandins. In an alternative pathway of prostanoid biosynthesis, converts 2-arachidonoyl lysophopholipids to prostanoid lysophopholipids, which are then hydrolyzed by intracellular phospholipases to release free prostanoids. Metabolizes 2-arachidonoyl glycerol yielding the glyceryl ester of PGH2, a process that can contribute to pain response. Generates lipid mediators from n-3 and n-6 polyunsaturated fatty acids (PUFAs) via a lipoxygenase-type mechanism. Oxygenates PUFAs to hydroperoxy compounds and then reduces them to corresponding alcohols. Plays a role in the generation of resolution phase interaction products (resolvins) during both sterile and infectious inflammation. Metabolizes docosahexaenoate (DHA, C22:6(n-3)) to 17R-HDHA, a precursor of the D-series resolvins (RvDs). As a component of the biosynthetic pathway of E-series resolvins (RvEs), converts eicosapentaenoate (EPA, C20:5(n-3)) primarily to 18S-HEPE that is further metabolized by ALOX5 and LTA4H to generate 18S-RvE1 and 18S-RvE2. In vascular endothelial cells, converts docosapentaenoate (DPA, C22:5(n-3)) to 13R-HDPA, a precursor for 13-series resolvins (RvTs) shown to activate macrophage phagocytosis during bacterial infection. In activated leukocytes, contributes to oxygenation of hydroxyeicosatetraenoates (HETE) to diHETES (5,15-diHETE and 5,11-diHETE). Can also use linoleate (LA, (9Z,12Z)-octadecadienoate, C18:2(n-6)) as substrate and produce hydroxyoctadecadienoates (HODEs) in a regio- and stereospecific manner, being (9R)-HODE ((9R)-hydroxy-(10E,12Z)-octadecadienoate) and (13S)-HODE ((13S)-hydroxy-(9Z,11E)-octadecadienoate) its major products. During neuroinflammation, plays a role in neuronal secretion of specialized preresolving mediators (SPMs) 15R-lipoxin A4 that regulates phagocytic microglia. The polypeptide is Prostaglandin G/H synthase 2 (Mus musculus (Mouse)).